The chain runs to 114 residues: Large ribosomal subunit protein uL22 (114 aa).

It belongs to the universal ribosomal protein uL22 family. Part of the 50S ribosomal subunit.

In terms of biological role, this protein binds specifically to 23S rRNA; its binding is stimulated by other ribosomal proteins, e.g. L4, L17, and L20. It is important during the early stages of 50S assembly. It makes multiple contacts with different domains of the 23S rRNA in the assembled 50S subunit and ribosome. Its function is as follows. The globular domain of the protein is located near the polypeptide exit tunnel on the outside of the subunit, while an extended beta-hairpin is found that lines the wall of the exit tunnel in the center of the 70S ribosome. This chain is Large ribosomal subunit protein uL22, found in Desulfitobacterium hafniense (strain Y51).